The sequence spans 837 residues: Amyloid-beta A4 precursor protein-binding family A member 1 (837 aa).

3 disordered regions span residues 1-93 (MNHL…DTAE), 238-342 (YDER…SKEK), and 358-435 (EEVK…ESRK). The span at 23-38 (ESVEADLEHPEVEEEQ) shows a compositional bias: acidic residues. Serine 78, serine 242, serine 246, serine 248, serine 263, serine 280, and serine 285 each carry phosphoserine. The munc-18-1 binding stretch occupies residues 226–314 (YRQEALGARL…TPAGGRPDSP (89 aa)). The segment covering 238–254 (YDERSDGESDSPEKEAE) has biased composition (basic and acidic residues). Threonine 305 is subject to Phosphothreonine. 2 positions are modified to phosphoserine: serine 313 and serine 367. Threonine 370 bears the Phosphothreonine mark. An LIN-2/CASK binding region spans residues 373 to 436 (EPKEPIWVMR…ASTNKESRKS (64 aa)). Over residues 387-398 (PTRDCDDQRPMD) the composition is skewed to basic and acidic residues. A compositionally biased stretch (low complexity) spans 399-418 (GDSPSPGSSSPLGAESSSTS). Phosphoserine is present on residues serine 401, serine 403, serine 408, and serine 568. The region spanning 457-643 (DGIIFAANYL…LLNTQDMYND (187 aa)) is the PID domain. The tract at residues 626-641 (LSQKEYSDLLNTQDMY) is autoinhibitory helix linker. PDZ domains follow at residues 656–742 (DVFI…IVRC) and 747–822 (TVLI…TMPA).

In terms of assembly, part of a multimeric complex containing STXBP1 and STX1A. Interacts with STXBP1. Also part of the brain-specific heterotrimeric complex LIN-10/X11-alpha, LIN-2/CASK, and LIN7. Component of the brain-specific heterotrimeric complex (LIN-10-LIN-2-LIN-7 complex) composed of at least APBA1, CASK, and LIN7, which associates with the motor protein KIF17 to transport vesicles along microtubules. Within the complex, interacts (via PDZ domain) with the motor protein KIF17; the interaction is direct and is required for association of KIF17 with the cargo that is to be transported. Both isoform 1 and isoform 2 bind to the cytoplasmic domain of amyloid protein (APP). Interacts (via PDZ 1 and 2 domains) with FSPB. Isoform 2, but not isoform 1, interacts (via its truncated PID domain) with active, GTP-bound RAB6A and RAB6B. In terms of tissue distribution, brain and spinal cord. Isoform 2 is expressed in testis and brain, but not detected in lung, liver or spleen.

The protein resides in the cytoplasm. It is found in the perinuclear region. It localises to the nucleus. The protein localises to the golgi apparatus. In terms of biological role, putative function in synaptic vesicle exocytosis by binding to Munc18-1, an essential component of the synaptic vesicle exocytotic machinery. May modulate processing of the amyloid-beta precursor protein (APP) and hence formation of APP-beta. Component of the LIN-10-LIN-2-LIN-7 complex, which associates with the motor protein KIF17 to transport vesicles containing N-methyl-D-aspartate (NMDA) receptor subunit NR2B along microtubules. This Homo sapiens (Human) protein is Amyloid-beta A4 precursor protein-binding family A member 1 (APBA1).